Consider the following 95-residue polypeptide: Co-chaperonin GroES (95 aa).

It belongs to the GroES chaperonin family. In terms of assembly, heptamer of 7 subunits arranged in a ring. Interacts with the chaperonin GroEL.

The protein localises to the cytoplasm. Its function is as follows. Together with the chaperonin GroEL, plays an essential role in assisting protein folding. The GroEL-GroES system forms a nano-cage that allows encapsulation of the non-native substrate proteins and provides a physical environment optimized to promote and accelerate protein folding. GroES binds to the apical surface of the GroEL ring, thereby capping the opening of the GroEL channel. This chain is Co-chaperonin GroES, found in Nitratidesulfovibrio vulgaris (strain ATCC 29579 / DSM 644 / CCUG 34227 / NCIMB 8303 / VKM B-1760 / Hildenborough) (Desulfovibrio vulgaris).